Here is a 312-residue protein sequence, read N- to C-terminus: DNA-directed RNA polymerase subunit alpha (312 aa).

The alpha N-terminal domain (alpha-NTD) stretch occupies residues 1–229 (MLQYQIDRVD…ALFQPLATVT (229 aa)). Residues 241–312 (SAESQIPLEE…ISLPQSRTTA (72 aa)) are alpha C-terminal domain (alpha-CTD).

It belongs to the RNA polymerase alpha chain family. In terms of assembly, in cyanobacteria the RNAP catalytic core is composed of 2 alpha, 1 beta, 1 beta', 1 gamma and 1 omega subunit. When a sigma factor is associated with the core the holoenzyme is formed, which can initiate transcription.

It catalyses the reaction RNA(n) + a ribonucleoside 5'-triphosphate = RNA(n+1) + diphosphate. Functionally, DNA-dependent RNA polymerase catalyzes the transcription of DNA into RNA using the four ribonucleoside triphosphates as substrates. The protein is DNA-directed RNA polymerase subunit alpha of Synechococcus sp. (strain RCC307).